Consider the following 194-residue polypeptide: NADH-quinone oxidoreductase subunit B 1 (194 aa).

A compositionally biased stretch (polar residues) spans 1–12 (MGVTPVSNQPLV). The interval 1 to 23 (MGVTPVSNQPLVAQQPKGIIDPS) is disordered. 4 residues coordinate [4Fe-4S] cluster: C73, C74, C138, and C168.

The protein belongs to the complex I 20 kDa subunit family. In terms of assembly, NDH-1 is composed of 14 different subunits. Subunits NuoB, C, D, E, F, and G constitute the peripheral sector of the complex. It depends on [4Fe-4S] cluster as a cofactor.

It is found in the cell inner membrane. It carries out the reaction a quinone + NADH + 5 H(+)(in) = a quinol + NAD(+) + 4 H(+)(out). In terms of biological role, NDH-1 shuttles electrons from NADH, via FMN and iron-sulfur (Fe-S) centers, to quinones in the respiratory chain. The immediate electron acceptor for the enzyme in this species is believed to be ubiquinone. Couples the redox reaction to proton translocation (for every two electrons transferred, four hydrogen ions are translocated across the cytoplasmic membrane), and thus conserves the redox energy in a proton gradient. The chain is NADH-quinone oxidoreductase subunit B 1 from Rhizobium etli (strain ATCC 51251 / DSM 11541 / JCM 21823 / NBRC 15573 / CFN 42).